The following is a 101-amino-acid chain: Small ribosomal subunit protein uS10 (101 aa).

Belongs to the universal ribosomal protein uS10 family. As to quaternary structure, part of the 30S ribosomal subunit.

Its function is as follows. Involved in the binding of tRNA to the ribosomes. This is Small ribosomal subunit protein uS10 from Cytophaga hutchinsonii (strain ATCC 33406 / DSM 1761 / CIP 103989 / NBRC 15051 / NCIMB 9469 / D465).